A 235-amino-acid chain; its full sequence is Probable flavin-dependent thymidylate synthase (235 aa).

Residues 1–229 form the ThyX domain; the sequence is MKVQLIASTI…PNTYQDIPTE (229 aa). Residues S70 and 93 to 95 contribute to the FAD site; that span reads RHR. DUMP is bound by residues 90-93, 103-105, and R168; these read ELER and SQR. The ThyX motif motif lies at 93–103; sequence RHRHLSFSVVS. Residue 184-186 coordinates FAD; that stretch reads NHR. R195 provides a ligand contact to dUMP. Catalysis depends on R195, which acts as the Involved in ionization of N3 of dUMP, leading to its activation.

Belongs to the thymidylate synthase ThyX family. In terms of assembly, homotetramer. It depends on FAD as a cofactor.

The catalysed reaction is dUMP + (6R)-5,10-methylene-5,6,7,8-tetrahydrofolate + NADPH + H(+) = dTMP + (6S)-5,6,7,8-tetrahydrofolate + NADP(+). It participates in pyrimidine metabolism; dTTP biosynthesis. Catalyzes the reductive methylation of 2'-deoxyuridine-5'-monophosphate (dUMP) to 2'-deoxythymidine-5'-monophosphate (dTMP) while utilizing 5,10-methylenetetrahydrofolate (mTHF) as the methyl donor, and NADPH and FADH(2) as the reductant. The chain is Probable flavin-dependent thymidylate synthase (48) from Mycobacterium (Mycobacteriophage D29).